The primary structure comprises 555 residues: Dynein regulatory complex protein 11 (555 aa).

2 consecutive IQ domains span residues 154–183 (EDEA…TKRQ) and 199–226 (HEEA…ADKE). Disordered regions lie at residues 232–255 (MKPK…MRRK), 299–377 (KRNP…EQKI), 450–469 (AAKL…EPFS), and 501–555 (AKKD…SCGA). Composition is skewed to basic and acidic residues over residues 235-244 (KPRDPKRDPQ) and 338-367 (GDGK…KGGG). A compositionally biased stretch (basic residues) spans 452–464 (KLGKKGKKKKGKK). Over residues 501 to 521 (AKKDEKDAAGDGKGKGKDGKG) the composition is skewed to basic and acidic residues. Residues 537-546 (KKKKGGKKKS) show a composition bias toward basic residues.

The protein belongs to the AAA ATPase family. DRC11 subfamily. As to quaternary structure, component of the nexin-dynein regulatory complex (N-DRC). Interacts with DRC5.

The protein resides in the cytoplasm. It localises to the cytoskeleton. Its subcellular location is the flagellum axoneme. Component of the nexin-dynein regulatory complex (N-DRC), a key regulator of ciliary/flagellar motility which maintains the alignment and integrity of the distal axoneme and regulates microtubule sliding in motile axonemes. This chain is Dynein regulatory complex protein 11, found in Chlamydomonas reinhardtii (Chlamydomonas smithii).